The chain runs to 460 residues: Crocetin glucosyltransferase 2 (460 aa).

His19 serves as the catalytic Proton acceptor. His19 is an an anthocyanidin binding site. Positions 133, 333, 348, 351, 352, 353, 356, 372, and 373 each coordinate UDP-alpha-D-glucose.

The protein belongs to the UDP-glycosyltransferase family. Mainly expressed in fully developed stigmas.

The catalysed reaction is crocetin + UDP-alpha-D-glucose = beta-D-glucosyl crocetin + UDP. It catalyses the reaction beta-D-glucosyl crocetin + UDP-alpha-D-glucose = bis(beta-D-glucosyl) crocetin + UDP. It carries out the reaction beta-D-gentiobiosyl crocetin + UDP-alpha-D-glucose = beta-D-gentiobiosyl beta-D-glucosyl crocetin + UDP. Its function is as follows. Crocetin glucosyltransferase involved in the synthesis of crocin, one of the apocarotenoids responsible for the color and bitter taste of saffron. This Crocus sativus (Saffron) protein is Crocetin glucosyltransferase 2 (GLT2).